The chain runs to 178 residues: N-alpha-acetyltransferase 20 (178 aa).

Residues 2–157 (TTLRAFTCDD…DAYDMRKALS (156 aa)) enclose the N-acetyltransferase domain.

It belongs to the acetyltransferase family. ARD1 subfamily. Component of the N-terminal acetyltransferase B (NatB) complex which is composed of NAA20 and NAA25.

It localises to the cytoplasm. The protein resides in the nucleus. It catalyses the reaction N-terminal L-methionyl-L-asparaginyl-[protein] + acetyl-CoA = N-terminal N(alpha)-acetyl-L-methionyl-L-asparaginyl-[protein] + CoA + H(+). The enzyme catalyses N-terminal L-methionyl-L-glutaminyl-[protein] + acetyl-CoA = N-terminal N(alpha)-acetyl-L-methionyl-L-glutaminyl-[protein] + CoA + H(+). It carries out the reaction N-terminal L-methionyl-L-aspartyl-[protein] + acetyl-CoA = N-terminal N(alpha)-acetyl-L-methionyl-L-aspartyl-[protein] + CoA + H(+). The catalysed reaction is N-terminal L-methionyl-L-glutamyl-[protein] + acetyl-CoA = N-terminal N(alpha)-acetyl-L-methionyl-L-glutamyl-[protein] + CoA + H(+). Its function is as follows. Catalytic subunit of the NatB complex which catalyzes acetylation of the N-terminal methionine residues of peptides beginning with Met-Asp, Met-Glu, Met-Asn and Met-Gln. Proteins with cell cycle functions are overrepresented in the pool of NatB substrates. Required for maintaining the structure and function of actomyosin fibers and for proper cellular migration. The chain is N-alpha-acetyltransferase 20 (NAA20) from Homo sapiens (Human).